The chain runs to 283 residues: Large ribosomal subunit protein mL46 (283 aa).

The residue at position 217 (Lys217) is an N6-succinyllysine. Lys228 bears the N6-acetyllysine mark. Lys246 is modified (N6-succinyllysine).

This sequence belongs to the mitochondrion-specific ribosomal protein mL46 family. Component of the mitochondrial ribosome large subunit (39S) which comprises a 16S rRNA and about 50 distinct proteins.

It localises to the mitochondrion. The chain is Large ribosomal subunit protein mL46 (Mrpl46) from Mus musculus (Mouse).